Reading from the N-terminus, the 294-residue chain is Chelated iron transport system membrane protein YfeC (294 aa).

The next 8 membrane-spanning stretches (helical) occupy residues 17-37 (AIWV…YLML), 51-71 (VVPG…GAFF), 93-113 (AIIG…VSLN), 140-160 (IIIL…LAVF), 169-189 (IGLS…ACTV), 194-214 (TVGA…AYLL), 221-241 (LLII…YLSF), and 246-266 (ATGG…FFFA).

The protein belongs to the ABC-3 integral membrane protein family.

The protein resides in the cell inner membrane. Part of an ATP-driven transport system YfeABC for chelated iron. In Yersinia pestis, this protein is Chelated iron transport system membrane protein YfeC (yfeC).